The chain runs to 290 residues: uncharacterized protein (290 aa).

This is an uncharacterized protein from Ictalurid herpesvirus 1 (strain Auburn) (IcHV-1).